A 65-amino-acid polypeptide reads, in one-letter code: Large ribosomal subunit protein bL35 (65 aa).

Belongs to the bacterial ribosomal protein bL35 family.

In Methylobacillus flagellatus (strain ATCC 51484 / DSM 6875 / VKM B-1610 / KT), this protein is Large ribosomal subunit protein bL35.